The chain runs to 495 residues: Calcium-dependent protein kinase 11 (495 aa).

The Protein kinase domain maps to 26–284; it reads YLLGKKLGQG…AHEALCHPWI (259 aa). Residues 32-40 and Lys-55 contribute to the ATP site; that span reads LGQGQFGTT. Asp-150 (proton acceptor) is an active-site residue. Ser-190 carries the phosphoserine modification. The autoinhibitory domain stretch occupies residues 290–320; it reads APDKPLDPAVLSRLKQFSQMNKIKKMALRVI. 4 consecutive EF-hand domains span residues 327–362, 363–398, 399–434, and 438–468; these read EEIGGLKELFKMIDTDNSGTITFEELKAGLKRVGSE, LMESEIKSLMDAADIDNSGTIDYGEFLAATLHMNKM, EREENLVAAFSYFDKDGSGYITIDELQSACTEFGLC, and LDDMIKEIDLDNDGKIDFSEFTAMMRKGDGV. Ca(2+)-binding residues include Asp-340, Asp-342, Ser-344, Thr-346, Glu-351, Asp-376, Asp-378, Ser-380, Thr-382, Glu-387, Asp-412, Asp-414, Ser-416, Tyr-418, Glu-423, Asp-446, Asp-448, Asp-450, Lys-452, and Glu-457.

This sequence belongs to the protein kinase superfamily. Ser/Thr protein kinase family. CDPK subfamily. Interacts with Di19.

The protein resides in the cytoplasm. It localises to the nucleus. The enzyme catalyses L-seryl-[protein] + ATP = O-phospho-L-seryl-[protein] + ADP + H(+). It carries out the reaction L-threonyl-[protein] + ATP = O-phospho-L-threonyl-[protein] + ADP + H(+). With respect to regulation, activated by calcium. Autophosphorylation may play an important role in the regulation of the kinase activity. Functionally, may play a role in signal transduction pathways that involve calcium as a second messenger. Functions as a regulator of the calcium-mediated abscisic acid (ABA) signaling pathway. Phosphorylates ABA-responsive transcription factors ABF1 and ABF4 in vitro. This Arabidopsis thaliana (Mouse-ear cress) protein is Calcium-dependent protein kinase 11 (CPK11).